We begin with the raw amino-acid sequence, 361 residues long: G-protein coupled receptor 68 (361 aa).

Over 1–12 the chain is Extracellular; that stretch reads MGNITADNTSMN. Residues Asn3 and Asn8 are each glycosylated (N-linked (GlcNAc...) asparagine). A helical transmembrane segment spans residues 13–49; it reads CDIDHTIHQTLAPVVYVMVLVVGFPANCLSLYYGYLQ. Intrachain disulfides connect Cys13–Cys258 and Cys94–Cys172. The Cytoplasmic segment spans residues 50–53; it reads IKAR. Residues 54 to 84 traverse the membrane as a helical segment; it reads NELGVYLCNLTVADLFYICSLPFWLQYVLQH. Residues 85–89 lie on the Extracellular side of the membrane; that stretch reads DHWSH. A helical membrane pass occupies residues 90 to 125; that stretch reads DDLSCQVCGILLYENIYISVGFLCCISIDRYLAVAH. Topologically, residues 126 to 133 are cytoplasmic; it reads PFRFHQFR. Residues 134–160 traverse the membrane as a helical segment; that stretch reads TLKAAMGVSALIWVKELLTSIYFLMHE. The Extracellular portion of the chain corresponds to 161-176; sequence EVVEDADRHRVCFEHY. An extracellular loop 2 (ECL2) region spans residues 161 to 176; it reads EVVEDADRHRVCFEHY. A helical membrane pass occupies residues 177 to 214; the sequence is PLEPRQRGINYYRFLVGFLFPICLLLASYRGILRAVRR. The Cytoplasmic portion of the chain corresponds to 215–218; sequence SHGT. A helical membrane pass occupies residues 219–254; it reads QKSRKDQIQRLVLSTVVIFLACFLPYHVLLLVRSLW. At 255-260 the chain is on the extracellular side; it reads ESSCDF. The chain crosses the membrane as a helical span at residues 261 to 289; sequence AKGIFNAYHFSLLLTSFNCVADPVLYCFV. Residues 290-361 lie on the Cytoplasmic side of the membrane; sequence SETTHRDLAR…MGGSPAGGLS (72 aa). The disordered stretch occupies residues 340–361; the sequence is LHPAFQTPHPPGMGGSPAGGLS. Residues 351-361 show a composition bias toward gly residues; the sequence is GMGGSPAGGLS.

It belongs to the G-protein coupled receptor 1 family.

The protein resides in the cell membrane. Activated by a network of residues that connects an extracellular-facing cavity to Glu-149, a conserved charged residue buried in the transmembrane core of the receptor. Protonation likely drives conformational changes in extracellular loop 2 (ECL2), which stabilizes movement of transmembrane 3 (TM3) and a series of rearrangements that connect the extracellular-facing cavity to Glu-149, a residue only conserved in proton-sensing G-protein coupled receptors. Activated in an allosteric manner by divalent metal ions at the extracellular surface following the order: Cd(2+) &gt; Co(2+) &gt; Ni(2+) &gt; Zn(2+) &gt; Fe(2+) &gt; Ca(2+) &gt; Mg(2+). Proton-sensing G-protein coupled receptor activated by extracellular pH, which is required to monitor pH changes and generate adaptive reactions. The receptor is almost silent at pH 7.8 but fully activated at pH 6.8. Ligand binding causes a conformation change that triggers signaling via guanine nucleotide-binding proteins (G proteins) and modulates the activity of downstream effectors, such as phospholipase C. GPR68 is mainly coupled to G(q) G proteins and mediates production of diacylglycerol (DAG) and inositol 1,4,5-trisphosphate (IP3). Acts as a key mechanosensor of fluid shear stress and membrane stretch. Expressed in endothelial cells of small-diameter resistance arteries, where it mediates flow-induced dilation in response to shear stress. May represents an osteoblastic pH sensor regulating cell-mediated responses to acidosis in bone. Acts as a regulator of calcium-sensing receptor CASR in a seesaw manner: GPR68-mediated signaling inhibits CASR signaling in response to protons, while CASR inhibits GPR68 in presence of extracellular calcium. This Bos taurus (Bovine) protein is G-protein coupled receptor 68 (GPR68).